Consider the following 63-residue polypeptide: MLNSEHFNLIQRALDATANELKELGTDSSPSVISHAQTDLEKAVEHIYSTDHPFLSSHVINRK.

A signal peptide spans 1-18 (MLNSEHFNLIQRALDATA).

This is an uncharacterized protein from Bacillus subtilis (strain 168).